We begin with the raw amino-acid sequence, 543 residues long: Thermosome subunit beta (543 aa).

The disordered stretch occupies residues 522-543 (TKSSSSSSNPPKSGSSSESSED). Low complexity predominate over residues 523-543 (KSSSSSSNPPKSGSSSESSED).

The protein belongs to the TCP-1 chaperonin family. In terms of assembly, forms a Heterooligomeric complex of two stacked eight-membered rings. The N-terminus is blocked.

Functionally, molecular chaperone; binds unfolded polypeptides in vitro, and has a weak ATPase activity. This is Thermosome subunit beta (thsB) from Thermoplasma acidophilum (strain ATCC 25905 / DSM 1728 / JCM 9062 / NBRC 15155 / AMRC-C165).